The primary structure comprises 729 residues: MLYKGDTLYLDWLEDGIAELVFDTPGSVNKLDTATVASLGEAIGVLEQQSDLKGLLLRSNKAAFIVGADITEFLSLFLVPEEQLSQWLHFANSVFNRLEDLPVPTIAAVNGYALGGGCECVLATDYRLATPDLRIGLPETKLGIMPGFGGSVRMPRMLGADSALEIIAAGKDVGADQALKIGLVDGVVKAEKLVEGAIAILRQAINGDLDWKAKRQPKLEPLKLSKIEAAMSFTIAKGMVAQTAGKHYPAPITAVKTIEAAARFGREEALNLENKSFVPLAHTNEARALVGIFLNDQYVKGKAKKLTKDVETPKQAAVLGAGIMGGGIAYQSAWKGVPVVMKDINDKSLTLGMTEAAKLLNKQLERGKIDGLKLAGVISTIHPTLDYAGFDRVDVVVEAVVENPKVKKAVLAETEQKVRPDTVLASNTSTIPISELANALERPENFCGMHFFNPVHRMPLVEIIRGEKSSDETIAKVVAWASKMGKTPIVVNDCPGFFVNRVLFPYFAGFSQLLRDGAGFRKIDKVMEKQFGWPMGPAYLLDVVGIDTAHHAQAVMAAGFPQRMQKDYRDAIDALFDANRFGQKNGLGFWRYKEDSKGKPKKEEDVVVDDLLAKVSQPKRDFSEEEIIARMMIPMVNEVVRCLEEGIIATPAEADMALVYGLGFPPFHGGAFRWLDTLGSAKYLDMAQQYQHLGPLYEVPEGLRNKARHNEPYYPPVEPARPVGDLKTA.

The interval 1 to 189 (MLYKGDTLYL…KIGLVDGVVK (189 aa)) is enoyl-CoA hydratase/isomerase. Aspartate 296 serves as a coordination point for substrate. A 3-hydroxyacyl-CoA dehydrogenase region spans residues 311 to 729 (ETPKQAAVLG…ARPVGDLKTA (419 aa)). NAD(+) is bound by residues methionine 324, aspartate 343, 400-402 (VVE), lysine 407, and serine 429. Histidine 450 functions as the For 3-hydroxyacyl-CoA dehydrogenase activity in the catalytic mechanism. Residue asparagine 453 coordinates NAD(+). Substrate is bound by residues asparagine 500 and tyrosine 660. The interval 708-729 (RHNEPYYPPVEPARPVGDLKTA) is disordered.

In the N-terminal section; belongs to the enoyl-CoA hydratase/isomerase family. It in the C-terminal section; belongs to the 3-hydroxyacyl-CoA dehydrogenase family. Heterotetramer of two alpha chains (FadB) and two beta chains (FadA).

The enzyme catalyses a (3S)-3-hydroxyacyl-CoA + NAD(+) = a 3-oxoacyl-CoA + NADH + H(+). The catalysed reaction is a (3S)-3-hydroxyacyl-CoA = a (2E)-enoyl-CoA + H2O. It catalyses the reaction a 4-saturated-(3S)-3-hydroxyacyl-CoA = a (3E)-enoyl-CoA + H2O. It carries out the reaction (3S)-3-hydroxybutanoyl-CoA = (3R)-3-hydroxybutanoyl-CoA. The enzyme catalyses a (3Z)-enoyl-CoA = a 4-saturated (2E)-enoyl-CoA. The catalysed reaction is a (3E)-enoyl-CoA = a 4-saturated (2E)-enoyl-CoA. It participates in lipid metabolism; fatty acid beta-oxidation. Its function is as follows. Involved in the aerobic and anaerobic degradation of long-chain fatty acids via beta-oxidation cycle. Catalyzes the formation of 3-oxoacyl-CoA from enoyl-CoA via L-3-hydroxyacyl-CoA. It can also use D-3-hydroxyacyl-CoA and cis-3-enoyl-CoA as substrate. The sequence is that of Fatty acid oxidation complex subunit alpha from Escherichia coli (strain UTI89 / UPEC).